The following is a 248-amino-acid chain: Ureidoacrylate amidohydrolase RutB (248 aa).

Catalysis depends on Asp-41, which acts as the Proton acceptor. Lys-150 is an active-site residue. The active-site Nucleophile is the Cys-183.

This sequence belongs to the isochorismatase family. RutB subfamily.

The enzyme catalyses (Z)-3-ureidoacrylate + H2O + H(+) = (Z)-3-aminoacrylate + NH4(+) + CO2. The catalysed reaction is (Z)-3-ureidoacrylate + H2O = (Z)-3-aminoacrylate + carbamate + H(+). It catalyses the reaction (Z)-2-methylureidoacrylate + H2O + H(+) = (Z)-2-methylaminoacrylate + NH4(+) + CO2. In terms of biological role, hydrolyzes ureidoacrylate to form aminoacrylate and carbamate. The carbamate hydrolyzes spontaneously, thereby releasing one of the nitrogen atoms of the pyrimidine ring as ammonia and one of its carbon atoms as CO2. The chain is Ureidoacrylate amidohydrolase RutB from Methylorubrum extorquens (strain DSM 6343 / CIP 106787 / DM4) (Methylobacterium extorquens).